The primary structure comprises 102 residues: Acid shock protein (102 aa).

A signal peptide spans 1–21 (MKKVLALVVAAAMGLSSAAFA). The span at 22 to 41 (AETATTPAPTATTTKAAPAK) shows a compositional bias: low complexity. The propeptide occupies 22–58 (AETATTPAPTATTTKAAPAKTTHHKKQHKAAPAQKAQ). Residues 22–102 (AETATTPAPT…PAKPAAQPAA (81 aa)) are disordered. Over residues 80-90 (AAKKHAGKHGH) the composition is skewed to basic residues. Residues 91–102 (QQPAKPAAQPAA) show a composition bias toward low complexity.

It belongs to the Asr family. Post-translationally, proteolytic processing gives rise to the active protein.

It localises to the periplasm. Its function is as follows. Required for growth and/or survival at acidic conditions. This Shigella flexneri protein is Acid shock protein.